The chain runs to 97 residues: HssA/B-like protein 32 (97 aa).

Disordered stretches follow at residues Met-1 to Ser-23 and Ala-62 to Ser-97. Positions Ala-62–Gly-74 are enriched in gly residues. Over residues Ser-75–Gly-88 the composition is skewed to basic residues.

Belongs to the hssA/B family.

This Dictyostelium discoideum (Social amoeba) protein is HssA/B-like protein 32 (hssl32).